The chain runs to 111 residues: Cell cycle protein GpsB (111 aa).

The stretch at 38–72 forms a coiled coil; that stretch reads IKDYEAFHKEFDQLKQQNARLKRELEEQKVAATQV.

Belongs to the GpsB family. In terms of assembly, forms polymers through the coiled coil domains. Interacts with PBP1, MreC and EzrA.

Its subcellular location is the cytoplasm. Divisome component that associates with the complex late in its assembly, after the Z-ring is formed, and is dependent on DivIC and PBP2B for its recruitment to the divisome. Together with EzrA, is a key component of the system that regulates PBP1 localization during cell cycle progression. Its main role could be the removal of PBP1 from the cell pole after pole maturation is completed. Also contributes to the recruitment of PBP1 to the division complex. Not essential for septum formation. This is Cell cycle protein GpsB from Bacillus mycoides (strain KBAB4) (Bacillus weihenstephanensis).